Reading from the N-terminus, the 574-residue chain is 2-succinyl-5-enolpyruvyl-6-hydroxy-3-cyclohexene-1-carboxylate synthase (574 aa).

This sequence belongs to the TPP enzyme family. MenD subfamily. Homodimer. Requires Mg(2+) as cofactor. The cofactor is Mn(2+). Thiamine diphosphate serves as cofactor.

It carries out the reaction isochorismate + 2-oxoglutarate + H(+) = 5-enolpyruvoyl-6-hydroxy-2-succinyl-cyclohex-3-ene-1-carboxylate + CO2. Its pathway is quinol/quinone metabolism; 1,4-dihydroxy-2-naphthoate biosynthesis; 1,4-dihydroxy-2-naphthoate from chorismate: step 2/7. The protein operates within cofactor biosynthesis; phylloquinone biosynthesis. Its function is as follows. Catalyzes the thiamine diphosphate-dependent decarboxylation of 2-oxoglutarate and the subsequent addition of the resulting succinic semialdehyde-thiamine pyrophosphate anion to isochorismate to yield 2-succinyl-5-enolpyruvyl-6-hydroxy-3-cyclohexene-1-carboxylate (SEPHCHC). The protein is 2-succinyl-5-enolpyruvyl-6-hydroxy-3-cyclohexene-1-carboxylate synthase of Prochlorococcus marinus (strain SARG / CCMP1375 / SS120).